The primary structure comprises 74 residues: Large ribosomal subunit protein bL31 (74 aa).

Residues Cys-16, Cys-18, Cys-38, and Cys-41 each contribute to the Zn(2+) site.

The protein belongs to the bacterial ribosomal protein bL31 family. Type A subfamily. Part of the 50S ribosomal subunit. Zn(2+) serves as cofactor.

Its function is as follows. Binds the 23S rRNA. In Acinetobacter baumannii (strain AB307-0294), this protein is Large ribosomal subunit protein bL31.